The chain runs to 169 residues: Lipoprotein signal peptidase (169 aa).

The next 4 membrane-spanning stretches (helical) occupy residues 4-24 (PICS…ILDI), 29-49 (WVMA…FNLT), 70-90 (WFFA…MYRS), and 101-121 (YALI…HGAV). Residues D123 and D141 contribute to the active site. Residues 137–157 (FNLADVAICIGAALVIFEGFL) traverse the membrane as a helical segment.

It belongs to the peptidase A8 family.

Its subcellular location is the cell inner membrane. The enzyme catalyses Release of signal peptides from bacterial membrane prolipoproteins. Hydrolyzes -Xaa-Yaa-Zaa-|-(S,diacylglyceryl)Cys-, in which Xaa is hydrophobic (preferably Leu), and Yaa (Ala or Ser) and Zaa (Gly or Ala) have small, neutral side chains.. It participates in protein modification; lipoprotein biosynthesis (signal peptide cleavage). In terms of biological role, this protein specifically catalyzes the removal of signal peptides from prolipoproteins. This chain is Lipoprotein signal peptidase, found in Yersinia pestis bv. Antiqua (strain Antiqua).